A 303-amino-acid polypeptide reads, in one-letter code: Probable 5-dehydro-4-deoxyglucarate dehydratase (303 aa).

Belongs to the DapA family.

The enzyme catalyses 5-dehydro-4-deoxy-D-glucarate + H(+) = 2,5-dioxopentanoate + CO2 + H2O. Its pathway is carbohydrate acid metabolism; D-glucarate degradation; 2,5-dioxopentanoate from D-glucarate: step 2/2. The sequence is that of Probable 5-dehydro-4-deoxyglucarate dehydratase from Acinetobacter baylyi (strain ATCC 33305 / BD413 / ADP1).